Reading from the N-terminus, the 375-residue chain is Platelet-derived growth factor receptor-like protein (375 aa).

A signal peptide spans M1–G21. The segment at T20 to T64 is disordered. Basic residues predominate over residues P40–P50. The Ig-like C2-type 1 domain occupies P62–K159. Cysteines 96 and 143 form a disulfide. 2 N-linked (GlcNAc...) asparagine glycosylation sites follow: N132 and N219. Residues P272–E373 form the Ig-like C2-type 2 domain. A disulfide bridge links C293 with C357.

In terms of assembly, forms a complex composed of PDGFRL, TNK2 and GRB2.

It is found in the secreted. The polypeptide is Platelet-derived growth factor receptor-like protein (PDGFRL) (Bos taurus (Bovine)).